The sequence spans 344 residues: Arginine N-succinyltransferase (344 aa).

Residue Leu-125 participates in succinyl-CoA binding. His-229 (proton donor) is an active-site residue.

The protein belongs to the arginine N-succinyltransferase family.

The enzyme catalyses succinyl-CoA + L-arginine = N(2)-succinyl-L-arginine + CoA + H(+). It participates in amino-acid degradation; L-arginine degradation via AST pathway; L-glutamate and succinate from L-arginine: step 1/5. In terms of biological role, catalyzes the transfer of succinyl-CoA to arginine to produce N(2)-succinylarginine. This is Arginine N-succinyltransferase from Salmonella dublin (strain CT_02021853).